A 456-amino-acid chain; its full sequence is Bifunctional protein GlmU (456 aa).

Positions 1 to 229 (MLNNAMSVVI…LSEVEGVNNR (229 aa)) are pyrophosphorylase. Residues 11–14 (LAAG), lysine 25, glutamine 76, 81–82 (GT), 103–105 (YGD), glycine 140, glutamate 154, asparagine 169, and asparagine 227 contribute to the UDP-N-acetyl-alpha-D-glucosamine site. Position 105 (aspartate 105) interacts with Mg(2+). Mg(2+) is bound at residue asparagine 227. Residues 230–250 (LQLSRLERVYQSEQAEKLLLA) are linker. The tract at residues 251–456 (GVMLRDPARF…EGWRRPVKKK (206 aa)) is N-acetyltransferase. UDP-N-acetyl-alpha-D-glucosamine-binding residues include arginine 333 and lysine 351. The active-site Proton acceptor is the histidine 363. UDP-N-acetyl-alpha-D-glucosamine is bound by residues tyrosine 366 and asparagine 377. Residues alanine 380, 386-387 (NY), serine 405, alanine 423, and arginine 440 each bind acetyl-CoA.

It in the N-terminal section; belongs to the N-acetylglucosamine-1-phosphate uridyltransferase family. The protein in the C-terminal section; belongs to the transferase hexapeptide repeat family. In terms of assembly, homotrimer. Mg(2+) serves as cofactor.

The protein localises to the cytoplasm. The catalysed reaction is alpha-D-glucosamine 1-phosphate + acetyl-CoA = N-acetyl-alpha-D-glucosamine 1-phosphate + CoA + H(+). It carries out the reaction N-acetyl-alpha-D-glucosamine 1-phosphate + UTP + H(+) = UDP-N-acetyl-alpha-D-glucosamine + diphosphate. The protein operates within nucleotide-sugar biosynthesis; UDP-N-acetyl-alpha-D-glucosamine biosynthesis; N-acetyl-alpha-D-glucosamine 1-phosphate from alpha-D-glucosamine 6-phosphate (route II): step 2/2. Its pathway is nucleotide-sugar biosynthesis; UDP-N-acetyl-alpha-D-glucosamine biosynthesis; UDP-N-acetyl-alpha-D-glucosamine from N-acetyl-alpha-D-glucosamine 1-phosphate: step 1/1. It participates in bacterial outer membrane biogenesis; LPS lipid A biosynthesis. Its function is as follows. Catalyzes the last two sequential reactions in the de novo biosynthetic pathway for UDP-N-acetylglucosamine (UDP-GlcNAc). The C-terminal domain catalyzes the transfer of acetyl group from acetyl coenzyme A to glucosamine-1-phosphate (GlcN-1-P) to produce N-acetylglucosamine-1-phosphate (GlcNAc-1-P), which is converted into UDP-GlcNAc by the transfer of uridine 5-monophosphate (from uridine 5-triphosphate), a reaction catalyzed by the N-terminal domain. In Escherichia coli O139:H28 (strain E24377A / ETEC), this protein is Bifunctional protein GlmU.